Here is a 344-residue protein sequence, read N- to C-terminus: L-erythro-3,5-diaminohexanoate dehydrogenase (344 aa).

This sequence belongs to the KDD family. In terms of assembly, homodimer.

The enzyme catalyses (3S,5S)-3,5-diaminohexanoate + NAD(+) + H2O = (5S)-5-amino-3-oxohexanoate + NH4(+) + NADH + H(+). Its pathway is amino-acid degradation; L-lysine degradation via acetate pathway. Functionally, involved in the anaerobic fermentation of lysine. Catalyzes the oxidative deamination of L-erythro-3,5-diaminohexanoate (3,5-DAH) to 3-keto-5-aminohexanoate (KAH). The polypeptide is L-erythro-3,5-diaminohexanoate dehydrogenase (Acetoanaerobium sticklandii (strain ATCC 12662 / DSM 519 / JCM 1433 / CCUG 9281 / NCIMB 10654 / HF) (Clostridium sticklandii)).